The following is a 353-amino-acid chain: UPF0283 membrane protein YcjF (353 aa).

3 consecutive transmembrane segments (helical) span residues 70–90, 100–120, and 213–233; these read MVMGGLALFGASVVGQGVQWT, VALGGCAAGALIIGAGVGSVV, and ESTLMIAVSPLALVDMAFIAW.

This sequence belongs to the UPF0283 family.

Its subcellular location is the cell inner membrane. The chain is UPF0283 membrane protein YcjF from Escherichia fergusonii (strain ATCC 35469 / DSM 13698 / CCUG 18766 / IAM 14443 / JCM 21226 / LMG 7866 / NBRC 102419 / NCTC 12128 / CDC 0568-73).